Reading from the N-terminus, the 324-residue chain is GTPase Era (324 aa).

Residues 31–199 enclose the Era-type G domain; that stretch reads KSGFIGIIGR…QELLVEHLEH (169 aa). The tract at residues 39–46 is G1; it reads GRPNVGKS. 39 to 46 is a binding site for GTP; that stretch reads GRPNVGKS. Residues 65 to 69 form a G2 region; it reads QTTRN. Positions 86–89 are G3; that stretch reads DTPG. Residues 86–90 and 148–151 each bind GTP; these read DTPGI and NKVD. A G4 region spans residues 148–151; it reads NKVD. The interval 178–180 is G5; that stretch reads FSA. The 77-residue stretch at 230–306 folds into the KH type-2 domain; the sequence is TREEVPHSVA…YLELFVKVQP (77 aa).

It belongs to the TRAFAC class TrmE-Era-EngA-EngB-Septin-like GTPase superfamily. Era GTPase family. As to quaternary structure, monomer.

The protein resides in the cytoplasm. Its subcellular location is the cell inner membrane. Its function is as follows. An essential GTPase that binds both GDP and GTP, with rapid nucleotide exchange. Plays a role in 16S rRNA processing and 30S ribosomal subunit biogenesis and possibly also in cell cycle regulation and energy metabolism. The chain is GTPase Era from Nostoc sp. (strain PCC 7120 / SAG 25.82 / UTEX 2576).